We begin with the raw amino-acid sequence, 585 residues long: ATP-dependent lipid A-core flippase (585 aa).

Helical transmembrane passes span leucine 24–alanine 44, leucine 65–glycine 85, isoleucine 143–valine 163, tryptophan 165–valine 185, and proline 253–proline 273. Positions alanine 29–arginine 310 constitute an ABC transmembrane type-1 domain. The 237-residue stretch at leucine 342–leucine 578 folds into the ABC transporter domain. Glycine 376–serine 383 contributes to the ATP binding site.

It belongs to the ABC transporter superfamily. Lipid exporter (TC 3.A.1.106) family. In terms of assembly, homodimer.

It is found in the cell inner membrane. The enzyme catalyses ATP + H2O + lipid A-core oligosaccharideSide 1 = ADP + phosphate + lipid A-core oligosaccharideSide 2.. Involved in lipopolysaccharide (LPS) biosynthesis. Translocates lipid A-core from the inner to the outer leaflet of the inner membrane. Transmembrane domains (TMD) form a pore in the inner membrane and the ATP-binding domain (NBD) is responsible for energy generation. This is ATP-dependent lipid A-core flippase from Hahella chejuensis (strain KCTC 2396).